The following is a 348-amino-acid chain: Short-wave-sensitive opsin 1 (348 aa).

Residues 1–33 (MRKMSEEEFYLFKNISSVGPWDGPQYHIAPVWA) lie on the Extracellular side of the membrane. Asparagine 14 is a glycosylation site (N-linked (GlcNAc...) asparagine). The helical transmembrane segment at 34 to 58 (FYLQAAFMGTVFLIGFPLNAMVLVA) threads the bilayer. The Cytoplasmic segment spans residues 59–70 (TLRYKKLRQPLN). The helical transmembrane segment at 71–96 (YILVNVSFGGFLLCIFSVFPVFVASC) threads the bilayer. Over 97-110 (NGYFVFGRHVCALE) the chain is Extracellular. Cysteine 107 and cysteine 184 are joined by a disulfide. The chain crosses the membrane as a helical span at residues 111–130 (GFLGTVAGLVTGWSLAFLAF). Residues 131–149 (ERYIVICKPFGNFRFSSKH) lie on the Cytoplasmic side of the membrane. The helical transmembrane segment at 150–173 (ALTVVLATWTIGIGVSIPPFFGWS) threads the bilayer. The Extracellular portion of the chain corresponds to 174–199 (RFIPEGLQCSCGPDWYTVGTKYRSES). A helical membrane pass occupies residues 200 to 227 (YTWFLFIFCFIVPLSLICFSYTQLLRAL). Residues 228–249 (KAVAAQQQESATTQKAEREVSR) are Cytoplasmic-facing. Residues 250–273 (MVVVMVGSFCVCYVPYAAFAMYMV) form a helical membrane-spanning segment. Residues 274–281 (NNRNHGLD) are Extracellular-facing. A helical transmembrane segment spans residues 282–306 (LRLVTIPSFFSKSACIYNPIIYCFM). At lysine 293 the chain carries N6-(retinylidene)lysine. The Cytoplasmic segment spans residues 307–348 (NKQFQACIMKMVCGKAMTDESDTCSSQKTEVSTVSSTQVGPN).

The protein belongs to the G-protein coupled receptor 1 family. Opsin subfamily. Post-translationally, phosphorylated on some or all of the serine and threonine residues present in the C-terminal region.

The protein resides in the cell membrane. It localises to the photoreceptor inner segment. It is found in the cell projection. The protein localises to the cilium. Its subcellular location is the photoreceptor outer segment. The protein resides in the cytoplasm. It localises to the perinuclear region. In terms of biological role, visual pigments are the light-absorbing molecules that mediate vision. They consist of an apoprotein, opsin, covalently linked to cis-retinal. Required for the maintenance of cone outer segment organization in the ventral retina, but not essential for the maintenance of functioning cone photoreceptors. Involved in ensuring correct abundance and localization of retinal membrane proteins. May increase spectral sensitivity in dim light. This chain is Short-wave-sensitive opsin 1 (OPN1SW), found in Pan paniscus (Pygmy chimpanzee).